A 274-amino-acid polypeptide reads, in one-letter code: Diaminopimelate epimerase (274 aa).

The substrate site is built by asparagine 11, glutamine 44, and asparagine 64. The active-site Proton donor is cysteine 73. Substrate contacts are provided by residues 74 to 75 (GN), asparagine 157, asparagine 190, and 208 to 209 (ER). The active-site Proton acceptor is cysteine 217. Residue 218–219 (GS) participates in substrate binding.

The protein belongs to the diaminopimelate epimerase family. Homodimer.

The protein localises to the cytoplasm. It carries out the reaction (2S,6S)-2,6-diaminopimelate = meso-2,6-diaminopimelate. It participates in amino-acid biosynthesis; L-lysine biosynthesis via DAP pathway; DL-2,6-diaminopimelate from LL-2,6-diaminopimelate: step 1/1. Its function is as follows. Catalyzes the stereoinversion of LL-2,6-diaminopimelate (L,L-DAP) to meso-diaminopimelate (meso-DAP), a precursor of L-lysine and an essential component of the bacterial peptidoglycan. This chain is Diaminopimelate epimerase, found in Escherichia coli O127:H6 (strain E2348/69 / EPEC).